A 356-amino-acid chain; its full sequence is Peptide chain release factor 1 (356 aa).

Gln233 bears the N5-methylglutamine mark.

Belongs to the prokaryotic/mitochondrial release factor family. Post-translationally, methylated by PrmC. Methylation increases the termination efficiency of RF1.

The protein resides in the cytoplasm. Peptide chain release factor 1 directs the termination of translation in response to the peptide chain termination codons UAG and UAA. The polypeptide is Peptide chain release factor 1 (Oceanobacillus iheyensis (strain DSM 14371 / CIP 107618 / JCM 11309 / KCTC 3954 / HTE831)).